The primary structure comprises 146 residues: GFLTAEEKGLVNGLWGKVNVDEVGGEALGRLLVVYPWTQRFFQSFGDLSSADAIMGNSKVKAHGKKVLNSFSDGLKNIDDLKGAFAKLSELHCDKLHVDPENFRLLGNVLVCVLAHHFGHEFNPQVQAAFQKVVAGVANALAHKYH.

One can recognise a Globin domain in the interval 2 to 146; sequence FLTAEEKGLV…VANALAHKYH (145 aa). At Ser-44 the chain carries Phosphoserine. Lys-59 is modified (N6-acetyllysine). A heme b-binding site is contributed by His-63. Lys-82 bears the N6-acetyllysine mark. His-92 serves as a coordination point for heme b. Cys-93 carries the post-translational modification S-nitrosocysteine. The residue at position 144 (Lys-144) is an N6-acetyllysine.

Belongs to the globin family. As to quaternary structure, heterotetramer of two alpha chains and two beta chains. Red blood cells.

Its function is as follows. Involved in oxygen transport from the lung to the various peripheral tissues. This Lynx lynx (Eurasian lynx) protein is Hemoglobin subunit beta (HBB).